The chain runs to 142 residues: Large ribosomal subunit protein uL11 (142 aa).

The protein belongs to the universal ribosomal protein uL11 family. As to quaternary structure, part of the ribosomal stalk of the 50S ribosomal subunit. Interacts with L10 and the large rRNA to form the base of the stalk. L10 forms an elongated spine to which L12 dimers bind in a sequential fashion forming a multimeric L10(L12)X complex. In terms of processing, one or more lysine residues are methylated.

Forms part of the ribosomal stalk which helps the ribosome interact with GTP-bound translation factors. The protein is Large ribosomal subunit protein uL11 of Akkermansia muciniphila (strain ATCC BAA-835 / DSM 22959 / JCM 33894 / BCRC 81048 / CCUG 64013 / CIP 107961 / Muc).